The sequence spans 410 residues: MRTRAGAFFGKQRSTSPSGSSTSASRQWLRSSPGRTQRPAAHRVLAVCVRNPARPAADHPLVSTTQAAAQRQARQWDSRSKPPQLQPQLRHTHVSRQAQRRQQQQVQQQAEAGALVVPTVITSFPEHLRPEVLANGVLLVDKPPHWEVPEVVAAVQRATGADKVASVAPLDARASGLMLLCFGSATRLAPRVERAAKRYTGTLVLGGSSLSGDVRGGSFRAAQLPAEHLTDEDLREAAQGLVTAAAGAPVHGAVATGHQGGGGLALRVLPRTWRLRQLPSSTEYYEERVEPSMRTLDMELLDFRVWRESALSHNDGAAGAEYDQHDQHKQELGRGLVWTRSPPHPRPVVLRFSALLVGRSHVRSLIAMYGRRLRTAACLDDLRRTEIGSFNVEEAWPLEALVPVLQRHAH.

2 disordered regions span residues 1-40 (MRTR…QRPA) and 56-106 (AADH…QQQV). A chloroplast-targeting transit peptide spans 1–46 (MRTRAGAFFGKQRSTSPSGSSTSASRQWLRSSPGRTQRPAAHRVLA). Low complexity predominate over residues 14-25 (STSPSGSSTSAS). Over residues 26–35 (RQWLRSSPGR) the composition is skewed to polar residues. Residues 96-106 (RQAQRRQQQQV) show a composition bias toward low complexity.

It belongs to the pseudouridine synthase TruB family. As to quaternary structure, possibly associated with other factors required for trans-splicing.

It is found in the plastid. Its subcellular location is the chloroplast. Required for trans-splicing of exons 2 and 3 of the chloroplast encoded psaA mRNA (a group II intron). It is not known if this protein has pseudouridine activity; mutation of the potential active site residue does not cause loss of trans-splicing. The protein is Trans-splicing factor Raa2, chloroplastic (RAA2) of Chlamydomonas reinhardtii (Chlamydomonas smithii).